A 200-amino-acid polypeptide reads, in one-letter code: Systemin (200 aa).

The tract at residues 1–33 is disordered; sequence MGTPSYDIKNKGDDMQEEPKVKLHHEKGGDEKE. Propeptides lie at residues 1-178 and 197-200; these read MGTP…REDL and NNKL. One copy of the 1; truncated repeat lies at 3–8; that stretch reads TPSYDI. Residues 8 to 33 are compositionally biased toward basic and acidic residues; it reads IKNKGDDMQEEPKVKLHHEKGGDEKE. 4 consecutive repeat copies span residues 37-45, 80-88, 117-125, and 145-153. Disordered stretches follow at residues 106–159 and 178–200; these read EEEE…MEGE and LAVQSKPPSKRDPPKMQTDNNKL. Composition is skewed to basic and acidic residues over residues 111 to 140 and 146 to 158; these read EKEKIVEKETPSQDINNKGDDAQEKPKVEH and KETPSQDIIKMEG.

In terms of tissue distribution, all organs except the roots. Transported out of wounds to distal tissues.

Its subcellular location is the cytoplasm. Activates a lipid-based signal transduction pathway in which linolenic acid is converted to jasmonic acid, a potent activator of defense gene transcription, including proteinase inhibitor. This is Systemin from Solanum lycopersicum (Tomato).